A 338-amino-acid chain; its full sequence is Selenocysteine methyltransferase (338 aa).

A Hcy-binding domain is found at 1-327; sequence MSSPLITDFL…DTIRGIYKIL (327 aa). Positions 245, 312, and 313 each coordinate Zn(2+).

As to quaternary structure, monomer. It depends on Zn(2+) as a cofactor. As to expression, present in all tissues tested.

The catalysed reaction is S-methyl-L-methionine + L-selenocysteine = Se-methyl-L-selenocysteine + L-methionine + H(+). Functionally, catalyzes the methylation of selenocysteine with S-methylmethionine as donor. Does not methylate cysteine. This chain is Selenocysteine methyltransferase (SMTA), found in Astragalus bisulcatus (Two-grooved milkvetch).